Here is a 161-residue protein sequence, read N- to C-terminus: Regulator of ribonuclease activity A (161 aa).

The protein belongs to the RraA family. Homotrimer. Binds to both RNA-binding sites in the C-terminal region of Rne and to RhlB.

The protein localises to the cytoplasm. In terms of biological role, globally modulates RNA abundance by binding to RNase E (Rne) and regulating its endonucleolytic activity. Can modulate Rne action in a substrate-dependent manner by altering the composition of the degradosome. Modulates RNA-binding and helicase activities of the degradosome. This is Regulator of ribonuclease activity A from Salmonella choleraesuis (strain SC-B67).